A 121-amino-acid polypeptide reads, in one-letter code: General odorant-binding protein 72 (121 aa).

2 disulfides stabilise this stretch: Cys45-Cys101 and Cys90-Cys110.

This sequence belongs to the PBP/GOBP family.

Its subcellular location is the secreted. Its function is as follows. Present in the aqueous fluid surrounding olfactory sensory dendrites and are thought to aid in the capture and transport of hydrophobic odorants into and through this fluid. The polypeptide is General odorant-binding protein 72 (Obp72) (Anopheles gambiae (African malaria mosquito)).